A 570-amino-acid polypeptide reads, in one-letter code: Urease subunit alpha (570 aa).

The 440-residue stretch at 131–570 (GGFDSHIHFI…LPLAQRYFMF (440 aa)) folds into the Urease domain. Ni(2+) is bound by residues H136, H138, and K219. Residue K219 is modified to N6-carboxylysine. H221 is a substrate binding site. Ni(2+) is bound by residues H248 and H274. The Proton donor role is filled by H322. D362 lines the Ni(2+) pocket.

Belongs to the metallo-dependent hydrolases superfamily. Urease alpha subunit family. Heterotrimer of UreA (gamma), UreB (beta) and UreC (alpha) subunits. Three heterotrimers associate to form the active enzyme. Ni cation is required as a cofactor. Carboxylation allows a single lysine to coordinate two nickel ions.

It localises to the cytoplasm. It catalyses the reaction urea + 2 H2O + H(+) = hydrogencarbonate + 2 NH4(+). The protein operates within nitrogen metabolism; urea degradation; CO(2) and NH(3) from urea (urease route): step 1/1. In Rhodopseudomonas palustris (strain TIE-1), this protein is Urease subunit alpha.